A 532-amino-acid chain; its full sequence is Protein DA1 (532 aa).

The disordered stretch occupies residues 26-71 (VYYDNYPTASHDDEPSAADTDADNDEPHHTQEPSTSEDNTSNDQEN). A compositionally biased stretch (polar residues) spans 57–68 (EPSTSEDNTSND). A UIM 1 domain is found at 69 to 88 (QENEDIDRAIALSLLEENQE). Residue Lys-95 forms a Glycyl lysine isopeptide (Lys-Gly) (interchain with G-Cter in ubiquitin) linkage. A UIM 2 domain is found at 101 to 120 (DEDEQLARALQESMVVGNSP). The LIM zinc-binding domain occupies 170-230 (RICAGCNMEI…KACYRERYHP (61 aa)). Residues Lys-221, Lys-348, Lys-376, Lys-381, Lys-391, Lys-474, Lys-475, and Lys-519 each participate in a glycyl lysine isopeptide (Lys-Gly) (interchain with G-Cter in ubiquitin) cross-link.

As to quaternary structure, interacts with ubiquitin. Interacts (via C-terminus) with DA2. Interacts with BB. Interacts with UBP15. Interacts with TCP14 and TCP15. Post-translationally, ubiquitinated at Lys-95, Lys-221, Lys-348, Lys-376, Lys-381, Lys-391, Lys-474, Lys-475 and Lys-519 by the E3 ubiquitin-protein ligases BB and DA2.

Ubiquitin receptor that limits final seed and organ size by restricting the period of cell proliferation. May act maternally to control seed mass. Acts synergistically with DA2 to regulate seed size. Functions synergistically with DA2 to restrict cell proliferation in the maternal integuments of ovules and developing seeds. Functions antagonistically in a common pathway with UBP15 to regulate seed size. Associates physically with UBP15 and modulates the stability of UBP15, which promote cell proliferation in the integuments of ovules and developing seeds. Functions as a peptidase and cleaves the N-terminal sequence of E3 ubiquitin-protein ligases BB and DA2 in a ubiquitin-dependent manner. Cleaves the deubiquitinating enzyme UBP15, which promotes cell proliferation, and the transcription factors TCP15 and TCP22, which promote cell proliferation and repress endoreduplication. Involved in the promotion of leaf senescence, in addition to its function in restricting plant growth. Acts redundantly with DAR1 and DAR2 to regulate endoreduplication during leaf development. Together with DAR1 and DAR2, modulates the protein stability of the transcription factors TCP14 and TCP15, which repress endoreduplication by directly regulating the expression of cell-cycle genes. This chain is Protein DA1 (DA1), found in Arabidopsis thaliana (Mouse-ear cress).